A 207-amino-acid polypeptide reads, in one-letter code: Ribosomal RNA small subunit methyltransferase G (207 aa).

Residues Gly73, Leu78, 124-125 (VE), and Arg139 contribute to the S-adenosyl-L-methionine site.

Belongs to the methyltransferase superfamily. RNA methyltransferase RsmG family.

The protein localises to the cytoplasm. The enzyme catalyses guanosine(527) in 16S rRNA + S-adenosyl-L-methionine = N(7)-methylguanosine(527) in 16S rRNA + S-adenosyl-L-homocysteine. Functionally, specifically methylates the N7 position of guanine in position 527 of 16S rRNA. In Escherichia coli O17:K52:H18 (strain UMN026 / ExPEC), this protein is Ribosomal RNA small subunit methyltransferase G.